Here is a 366-residue protein sequence, read N- to C-terminus: Glutamate 5-kinase (366 aa).

Residue lysine 17 participates in ATP binding. Substrate is bound by residues serine 57, aspartate 144, and asparagine 156. Residues 176 to 177 (SD) and 216 to 222 (TGGMASK) contribute to the ATP site. One can recognise a PUA domain in the interval 278–352 (QGILHIDEGA…GKSTQELPAE (75 aa)).

It belongs to the glutamate 5-kinase family.

Its subcellular location is the cytoplasm. It carries out the reaction L-glutamate + ATP = L-glutamyl 5-phosphate + ADP. Its pathway is amino-acid biosynthesis; L-proline biosynthesis; L-glutamate 5-semialdehyde from L-glutamate: step 1/2. Its function is as follows. Catalyzes the transfer of a phosphate group to glutamate to form L-glutamate 5-phosphate. This chain is Glutamate 5-kinase, found in Rhodococcus jostii (strain RHA1).